The primary structure comprises 345 residues: Fe(3+) ions import ATP-binding protein FbpC (345 aa).

The region spanning leucine 3–leucine 233 is the ABC transporter domain. An ATP-binding site is contributed by glycine 35–serine 42.

It belongs to the ABC transporter superfamily. Fe(3+) ion importer (TC 3.A.1.10) family. The complex is composed of two ATP-binding proteins (FbpC), two transmembrane proteins (FbpB) and a solute-binding protein (FbpA).

The protein localises to the cell membrane. It catalyses the reaction Fe(3+)(out) + ATP + H2O = Fe(3+)(in) + ADP + phosphate + H(+). Functionally, part of the ABC transporter complex FbpABC involved in Fe(3+) ions import. Responsible for energy coupling to the transport system. This is Fe(3+) ions import ATP-binding protein FbpC from Streptomyces avermitilis (strain ATCC 31267 / DSM 46492 / JCM 5070 / NBRC 14893 / NCIMB 12804 / NRRL 8165 / MA-4680).